The chain runs to 274 residues: Large ribosomal subunit protein uL2 (274 aa).

Disordered stretches follow at residues 38–57 (KRTG…VGGG) and 224–256 (AMNP…KGYK). Positions 229 to 239 (DHPHGGGEGRN) are enriched in basic and acidic residues.

This sequence belongs to the universal ribosomal protein uL2 family. Part of the 50S ribosomal subunit. Forms a bridge to the 30S subunit in the 70S ribosome.

In terms of biological role, one of the primary rRNA binding proteins. Required for association of the 30S and 50S subunits to form the 70S ribosome, for tRNA binding and peptide bond formation. It has been suggested to have peptidyltransferase activity; this is somewhat controversial. Makes several contacts with the 16S rRNA in the 70S ribosome. The chain is Large ribosomal subunit protein uL2 from Acinetobacter baumannii (strain AB307-0294).